A 155-amino-acid chain; its full sequence is Large ribosomal subunit protein uL13 (155 aa).

It belongs to the universal ribosomal protein uL13 family. As to quaternary structure, part of the 50S ribosomal subunit.

This protein is one of the early assembly proteins of the 50S ribosomal subunit, although it is not seen to bind rRNA by itself. It is important during the early stages of 50S assembly. The protein is Large ribosomal subunit protein uL13 of Rickettsia akari (strain Hartford).